A 355-amino-acid polypeptide reads, in one-letter code: Probable sugar phosphate/phosphate translocator At3g10290 (355 aa).

A disordered region spans residues Gln19–Pro51. The segment covering Gln22–Lys32 has biased composition (polar residues). 10 helical membrane passes run Thr55–Leu75, Ile89–Phe109, Phe124–Ser144, Val150–Ile170, Ala177–Gly197, Glu198–Phe218, Leu239–Glu259, Tyr277–Val297, Thr305–Phe325, and Pro328–Gly348.

This sequence belongs to the TPT transporter family. TPT (TC 2.A.7.9) subfamily.

The protein resides in the membrane. The sequence is that of Probable sugar phosphate/phosphate translocator At3g10290 from Arabidopsis thaliana (Mouse-ear cress).